Here is a 322-residue protein sequence, read N- to C-terminus: Protein-L-isoaspartate O-methyltransferase (322 aa).

Positions 1 to 101 (MSGERAKRFP…AKQGDRSAAP (101 aa)) are disordered. Positions 14-29 (EDLKREPRKPEGRVAE) are enriched in basic and acidic residues. Composition is skewed to low complexity over residues 33 to 51 (AGDA…PAAA) and 76 to 91 (HAPA…PQGG). Ser-170 is an active-site residue.

This sequence belongs to the methyltransferase superfamily. L-isoaspartyl/D-aspartyl protein methyltransferase family.

The protein resides in the cytoplasm. It carries out the reaction [protein]-L-isoaspartate + S-adenosyl-L-methionine = [protein]-L-isoaspartate alpha-methyl ester + S-adenosyl-L-homocysteine. Catalyzes the methyl esterification of L-isoaspartyl residues in peptides and proteins that result from spontaneous decomposition of normal L-aspartyl and L-asparaginyl residues. It plays a role in the repair and/or degradation of damaged proteins. The protein is Protein-L-isoaspartate O-methyltransferase of Burkholderia pseudomallei (strain 1106a).